We begin with the raw amino-acid sequence, 412 residues long: MSFIEKEDKAVFEAIQNEYNRQNNNIELIASENFVSEAVMEAQGSVLTNKYAEGYPGRRYYGGCQYVDITETLAIERAKELFGAEHVNVQPHSGSQANMAVYLVALDHGDTVLGMNLSHGGHLTHGSPVNFSGKFYNFVEYGVDKETERIDYEEVRRLAKENKPKLIVAGASAYPREIDFKKFKEIADEVGAKLMVDMAHIAGLVAAGLHQNPVDYADFVTTTTHKTLRGPRGGMILTKEEYAKQIDKTIFPGIQGGPLEHVIAAKAVAFGEALNPDFKDYQEQVVKNAKALADTLIEEGFRVVSGGTDNHLVAVDVKGSFGITGKEAEEALDEVGITCNKNTIPFDQEKPFVTSGLRLGTPAATTRGFEEADFEEVAKIISLVVQNPKDEAKLKEASDRVAALTSKHPLYK.

(6S)-5,6,7,8-tetrahydrofolate-binding positions include leucine 117 and 121–123 (GHL). Lysine 226 carries the post-translational modification N6-(pyridoxal phosphate)lysine. Glutamate 241 is a binding site for (6S)-5,6,7,8-tetrahydrofolate.

The protein belongs to the SHMT family. In terms of assembly, homodimer. Pyridoxal 5'-phosphate serves as cofactor.

It is found in the cytoplasm. The catalysed reaction is (6R)-5,10-methylene-5,6,7,8-tetrahydrofolate + glycine + H2O = (6S)-5,6,7,8-tetrahydrofolate + L-serine. It functions in the pathway one-carbon metabolism; tetrahydrofolate interconversion. The protein operates within amino-acid biosynthesis; glycine biosynthesis; glycine from L-serine: step 1/1. Functionally, catalyzes the reversible interconversion of serine and glycine with tetrahydrofolate (THF) serving as the one-carbon carrier. This reaction serves as the major source of one-carbon groups required for the biosynthesis of purines, thymidylate, methionine, and other important biomolecules. Also exhibits THF-independent aldolase activity toward beta-hydroxyamino acids, producing glycine and aldehydes, via a retro-aldol mechanism. The chain is Serine hydroxymethyltransferase from Staphylococcus carnosus (strain TM300).